A 136-amino-acid polypeptide reads, in one-letter code: 5-hydroxyisourate hydrolase (136 aa).

Residues 1 to 20 form the signal peptide; it reads MKRYILATVIASLVAAPAMA. Substrate contacts are provided by histidine 31, arginine 69, and tyrosine 133.

Belongs to the transthyretin family. 5-hydroxyisourate hydrolase subfamily. In terms of assembly, homotetramer.

It localises to the periplasm. It carries out the reaction 5-hydroxyisourate + H2O = 5-hydroxy-2-oxo-4-ureido-2,5-dihydro-1H-imidazole-5-carboxylate + H(+). In terms of biological role, catalyzes the hydrolysis of 5-hydroxyisourate (HIU) to 2-oxo-4-hydroxy-4-carboxy-5-ureidoimidazoline (OHCU). The sequence is that of 5-hydroxyisourate hydrolase (hiuH) from Salmonella typhimurium (strain LT2 / SGSC1412 / ATCC 700720).